Reading from the N-terminus, the 179-residue chain is Large ribosomal subunit protein uL5 (179 aa).

This sequence belongs to the universal ribosomal protein uL5 family. Part of the 50S ribosomal subunit; part of the 5S rRNA/L5/L18/L25 subcomplex. Contacts the 5S rRNA and the P site tRNA. Forms a bridge to the 30S subunit in the 70S ribosome.

Functionally, this is one of the proteins that bind and probably mediate the attachment of the 5S RNA into the large ribosomal subunit, where it forms part of the central protuberance. In the 70S ribosome it contacts protein S13 of the 30S subunit (bridge B1b), connecting the 2 subunits; this bridge is implicated in subunit movement. Contacts the P site tRNA; the 5S rRNA and some of its associated proteins might help stabilize positioning of ribosome-bound tRNAs. The protein is Large ribosomal subunit protein uL5 of Photorhabdus laumondii subsp. laumondii (strain DSM 15139 / CIP 105565 / TT01) (Photorhabdus luminescens subsp. laumondii).